A 202-amino-acid chain; its full sequence is Response regulator RamR (202 aa).

Residues M1–R121 form a response regulatory region. An HTH luxR-type domain is found at L135–G200. The segment at residues I159–A178 is a DNA-binding region (H-T-H motif).

In terms of assembly, homodimer, in the absence of phosphorylation. In terms of processing, may be phosphorylated by an unknown kinase, probably on Asp-56.

In terms of biological role, a transcription factor required for aerial hyphae formation on rich medium. Activates transcription of ramC. Might be part of a two-component regulatory system. Binds the promoter of ramC. Non-phosphorylated protein cooperatively binds multiple sites in the ramC promoter. Has not been seen to autophosphorylate using the small molecule phosphodonors phosphoramidate, acetyl phosphate or carbamoyl phosphate. Upon low expression suppresses the bald (bld, no aerial hyphae) phenotype of citA but not bldJ mutants; higher expression also suppresses the bldJ mutant as well as several other bld mutations, inducing SapB production even on media where SapB is normally not produced. Expression of the ram locus (ramA, ramB and ramR) induces rapid aerial mycelium formation in S.lividans. Overexpression suppresses the no aerial hyphae phenotype of a chaplin-negative strain, probably by inducing expression of SapB. Overexpression of RamR show there are about 280 genes having at least a threefold increase or fourfold decrease in RNA abundance versus wild-type including gene cluster SCO4072-SCO4075. In Streptomyces coelicolor (strain ATCC BAA-471 / A3(2) / M145), this protein is Response regulator RamR.